We begin with the raw amino-acid sequence, 491 residues long: MSLLMISENVKLAREYALLGNYDSAMVYYQGVLDQMNKYLYSVKDTYLQQKWQQVWQEINVEAKHVKDIMKTLESFKLDSTPLKAAQHDLPASEGEVWSMPVPVERRPSPGPRKRQSSQYSDSKSHGNRPGTTVRVHRSSAQNLHNDRGKAVRCREKKEQNKGREEKNKSPAAVTEPETNKFDSTGYDKDLVEALERDIISQNPNVRWDDIADLVEAKKLLKEAVVLPMWMPEFFKGIRRPWKGVLMVGPPGTGKTLLAKAVATECKTTFFNVSSSTLTSKYRGESEKLVRLLFEMARFYSPATIFIDEIDSICSRRGTSEEHEASRRVKAELLVQMDGVGGASENDDPSKMVMVLAATNFPWDIDEALRRRLEKRIYIPLPSAKGREELLRISLRELELADDVDLASIAENMEGYSGADITNVCRDASLMAMRRRIEGLTPEEIRNLSKEEMHMPTTMEDFEMALKKVSKSVSAADIERYEKWIFEFGSC.

Residues 1–29 (MSLLMISENVKLAREYALLGNYDSAMVYY) form an interaction with KATNB1 region. The segment at 1 to 75 (MSLLMISENV…VKDIMKTLES (75 aa)) is interaction with dynein and NDEL1. The tract at residues 1–185 (MSLLMISENV…EPETNKFDST (185 aa)) is interaction with microtubules. Phosphoserine; by DYRK2 occurs at positions 42 and 109. The segment at 87–185 (QHDLPASEGE…EPETNKFDST (99 aa)) is disordered. Thr-133 carries the phosphothreonine; by DYRK2 modification. Basic and acidic residues predominate over residues 145-169 (HNDRGKAVRCREKKEQNKGREEKNK). At Ser-170 the chain carries Phosphoserine. An ATP-binding site is contributed by 249-256 (GPPGTGKT).

Belongs to the AAA ATPase family. Katanin p60 subunit A1 subfamily. In terms of assembly, can homooligomerize into hexameric rings, which may be promoted by interaction with microtubules. Interacts with KATNB1, which may serve as a targeting subunit. Interacts with ASPM; the katanin complex formation KATNA1:KATNB1 is required for the association of ASPM Interacts with dynein and NDEL1. Associates with the E3 ligase complex containing DYRK2, EDD/UBR5, DDB1 and DCAF1 proteins (EDVP complex). Interacts with KLHL42 (via the kelch domains). Interacts with CUL3; the interaction is enhanced by KLHL42. Interacts with KATNB1 and KATNBL1. Interacts with CAMSAP2 and CAMSAP3; leading to regulate the length of CAMSAP-decorated microtubule stretches. Phosphorylation by DYRK2 triggers ubiquitination and subsequent degradation. Post-translationally, ubiquitinated by the BCR(KLHL42) E3 ubiquitin ligase complex, leading to its proteasomal degradation. Ubiquitinated by the EDVP E3 ligase complex and subsequently targeted for proteasomal degradation.

The protein resides in the cytoplasm. It localises to the midbody. The protein localises to the cytoskeleton. Its subcellular location is the microtubule organizing center. It is found in the centrosome. The protein resides in the spindle pole. It localises to the spindle. The enzyme catalyses n ATP + n H2O + a microtubule = n ADP + n phosphate + (n+1) alpha/beta tubulin heterodimers.. Its activity is regulated as follows. ATPase activity is stimulated by microtubules, which promote homooligomerization. ATP-dependent microtubule severing is stimulated by interaction with KATNB1. Functionally, catalytic subunit of a complex which severs microtubules in an ATP-dependent manner. Microtubule severing may promote rapid reorganization of cellular microtubule arrays and the release of microtubules from the centrosome following nucleation. Microtubule release from the mitotic spindle poles may allow depolymerization of the microtubule end proximal to the spindle pole, leading to poleward microtubule flux and poleward motion of chromosome. Microtubule release within the cell body of neurons may be required for their transport into neuronal processes by microtubule-dependent motor proteins. This transport is required for axonal growth. The protein is Katanin p60 ATPase-containing subunit A1 of Macaca fascicularis (Crab-eating macaque).